The sequence spans 453 residues: Nuclear distribution protein nudF-2 (453 aa).

The 33-residue stretch at 9–41 folds into the LisH domain; it reads QADELHRALIAYLTAANLPNTAAALREELNLSE. The stretch at 62–88 forms a coiled coil; it reads SVVRLQKKIMDLESRNHILQSELDNAT. The segment at 84–107 is disordered; sequence LDNATPTSRQNKDPVAWLPRAPPR. 7 WD repeats span residues 112–153, 155–195, 199–239, 242–281, 286–345, 347–386, and 391–449; these read SHRD…RTIK, HTKA…KNIR, GHDH…CVKT, GHAE…PEPK, GHEH…IKTL, GHDN…KCVK, and AHGH…LNVR.

Belongs to the WD repeat LIS1/nudF family. Self-associates. Interacts with ro-11/nde1 and dynein.

The protein localises to the cytoplasm. It localises to the cytoskeleton. The protein resides in the spindle pole. Positively regulates the activity of the minus-end directed microtubule motor protein dynein. May enhance dynein-mediated microtubule sliding by targeting dynein to the microtubule plus end. Required for nuclear migration during vegetative growth as well as development. Required for retrograde early endosome (EE) transport from the hyphal tip. Required for localization of dynein to the mitotic spindle poles. Recruits additional proteins to the dynein complex at SPBs. This Neurospora crassa (strain ATCC 24698 / 74-OR23-1A / CBS 708.71 / DSM 1257 / FGSC 987) protein is Nuclear distribution protein nudF-2 (nmp-1).